A 158-amino-acid chain; its full sequence is Glycosyl-phosphatidylinositol-anchored molecule-like protein (158 aa).

Residues 1-17 (MLLFALLLAMELPLVAA) form the signal peptide. A UPAR/Ly6 domain is found at 29-134 (LRCHDCAVIN…DEVTEEELPE (106 aa)). Intrachain disulfides connect cysteine 31/cysteine 55, cysteine 34/cysteine 42, cysteine 48/cysteine 73, cysteine 77/cysteine 104, and cysteine 105/cysteine 110.

It is found in the cell membrane. Its function is as follows. May play a role in the apoptotic pathway or cell-cycle regulation induced by p53/TP53 after DNA damage. This chain is Glycosyl-phosphatidylinositol-anchored molecule-like protein (GML), found in Homo sapiens (Human).